The chain runs to 87 residues: Probable Fe(2+)-trafficking protein (87 aa).

The protein belongs to the Fe(2+)-trafficking protein family.

Its function is as follows. Could be a mediator in iron transactions between iron acquisition and iron-requiring processes, such as synthesis and/or repair of Fe-S clusters in biosynthetic enzymes. The protein is Probable Fe(2+)-trafficking protein of Francisella philomiragia subsp. philomiragia (strain ATCC 25017 / CCUG 19701 / FSC 153 / O#319-036).